The sequence spans 410 residues: MKHPIHVTSEIGELQTVLLKRPGKEVENLTPDYLQQLLFDDIPYLPIIQKEHDYFAQTLRNRGVEVLYLEKLAAEALVDKKLREEFVDRILKEGQADVNVAHQTLKEYLLSFSNEELIQKIMGGVRKNEIETSKKTHLYELMEDHYPFYLDPMPNLYFTRDPAASVGDGLTINKMREPARRRESLFMEYIIKYHPRFEKHNVPIWLDRDYKFPIEGGDELILNEETIAIGVSARTSAKAIERLAKNLFSRQNKIKKVLAIEIPKCRAFMHLDTVFTMVDYDKFTIHPAIQGPKGNMNIYILEKGSDEETLKITHRTSLMEALKEVLGLSELVLIPCGGGDVIASAREQWNDGSNTLAIAPGVVVTYDRNYVSNTLLREHGIEVIEVLSSELSRGRGGPRCMSMPIVRKDI.

Cys400 serves as the catalytic Amidino-cysteine intermediate.

This sequence belongs to the arginine deiminase family.

It is found in the cytoplasm. It catalyses the reaction L-arginine + H2O = L-citrulline + NH4(+). The protein operates within amino-acid degradation; L-arginine degradation via ADI pathway; carbamoyl phosphate from L-arginine: step 1/2. This chain is Arginine deiminase, found in Bacillus cereus (strain ATCC 10987 / NRS 248).